The primary structure comprises 214 residues: 3-demethoxyubiquinol 3-hydroxylase (214 aa).

Residues Glu63, Glu93, His96, Glu145, Glu177, and His180 each contribute to the Fe cation site.

It belongs to the COQ7 family. The cofactor is Fe cation.

Its subcellular location is the cell membrane. It carries out the reaction a 5-methoxy-2-methyl-3-(all-trans-polyprenyl)benzene-1,4-diol + AH2 + O2 = a 3-demethylubiquinol + A + H2O. It functions in the pathway cofactor biosynthesis; ubiquinone biosynthesis. Functionally, catalyzes the hydroxylation of 2-nonaprenyl-3-methyl-6-methoxy-1,4-benzoquinol during ubiquinone biosynthesis. The polypeptide is 3-demethoxyubiquinol 3-hydroxylase (Psychrobacter arcticus (strain DSM 17307 / VKM B-2377 / 273-4)).